Consider the following 444-residue polypeptide: L-ornithine N(5)-monooxygenase (444 aa).

FAD contacts are provided by residues 40-48 (ERQPAFGWH) and Q59. K64 is a substrate binding site. An FAD-binding site is contributed by V125. NADP(+) is bound by residues 211-214 (AGQS) and R236. Residues 250–253 (NEIF) and N280 contribute to the substrate site. NADP(+) is bound at residue 280 to 282 (NYA). 408–410 (RCC) contacts FAD. A compositionally biased stretch (basic residues) spans 420 to 432 (SARRSKTGSRPRT). Residues 420–444 (SARRSKTGSRPRTMKAWPGPRTKND) form a disordered region.

Belongs to the lysine N(6)-hydroxylase/L-ornithine N(5)-oxygenase family. FAD serves as cofactor.

It catalyses the reaction L-ornithine + NADPH + O2 = N(5)-hydroxy-L-ornithine + NADP(+) + H2O. The protein operates within siderophore biosynthesis; ornibactin biosynthesis. Functionally, catalyzes the conversion of L-ornithine to N(5)-hydroxyornithine, the first step in the biosynthesis of all hydroxamate-containing siderophores, such as ornibactin. The sequence is that of L-ornithine N(5)-monooxygenase from Burkholderia cepacia (Pseudomonas cepacia).